The primary structure comprises 798 residues: Protocadherin beta-10 (798 aa).

A signal peptide spans M1 to A26. Over G27–L690 the chain is Extracellular. 5 consecutive Cadherin domains span residues V35–F133, T138–F242, Y247–L347, F352–F451, and Y456–V561. The N-linked (GlcNAc...) asparagine glycan is linked to N169. N-linked (GlcNAc...) asparagine glycans are attached at residues N418 and N436. N-linked (GlcNAc...) asparagine glycosylation occurs at N567. In terms of domain architecture, Cadherin 6 spans G568–L671. Residues V691–V711 form a helical membrane-spanning segment. Residues R712–Q798 are Cytoplasmic-facing.

Its subcellular location is the cell membrane. Its function is as follows. Potential calcium-dependent cell-adhesion protein. May be involved in the establishment and maintenance of specific neuronal connections in the brain. The protein is Protocadherin beta-10 (PCDHB10) of Pan troglodytes (Chimpanzee).